A 318-amino-acid polypeptide reads, in one-letter code: Protease HtpX homolog (318 aa).

The next 2 helical transmembrane spans lie at 6-26 (TAML…LIGG) and 28-48 (GGMM…YWNS). His130 serves as a coordination point for Zn(2+). Glu131 is a catalytic residue. His134 contributes to the Zn(2+) binding site. The next 2 membrane-spanning stretches (helical) occupy residues 145-165 (ITAT…FFGG) and 173-193 (PLGF…AMLV). Glu202 serves as a coordination point for Zn(2+). The interval 284 to 318 (NVSTGPVRAVNPTRKSRSVPNTGRGGSQPPRGPWS) is disordered.

It belongs to the peptidase M48B family. Zn(2+) serves as cofactor.

The protein resides in the cell inner membrane. The protein is Protease HtpX homolog of Rhizobium etli (strain ATCC 51251 / DSM 11541 / JCM 21823 / NBRC 15573 / CFN 42).